The sequence spans 457 residues: Serine/threonine-protein phosphatase 2A activator 2 (457 aa).

Disordered stretches follow at residues 387-407 and 426-457; these read DAHG…GEGQ and AEQE…IPFD. Residues 391–400 show a composition bias toward basic residues; it reads HIHPAGKPHA.

The protein belongs to the PTPA-type PPIase family.

The protein localises to the cytoplasm. It catalyses the reaction [protein]-peptidylproline (omega=180) = [protein]-peptidylproline (omega=0). Its function is as follows. PPIases accelerate the folding of proteins. It catalyzes the cis-trans isomerization of proline imidic peptide bonds in oligopeptides. Acts as a regulatory subunit for PP2A-like phosphatases modulating their activity or substrate specificity, probably by inducing a conformational change in the catalytic subunit, a direct target of the PPIase. Can reactivate inactive phosphatase PP2A-phosphatase methylesterase complexes (PP2Ai) in presence of ATP and Mg(2+) by dissociating the inactive form from the complex. The sequence is that of Serine/threonine-protein phosphatase 2A activator 2 (RRD2) from Mycosarcoma maydis (Corn smut fungus).